The sequence spans 1197 residues: Pleckstrin homology domain-containing family A member 7 (1197 aa).

2 consecutive WW domains span residues 8–41 (DTLP…HPRT) and 53–86 (SDLP…HPVT). Residues 98-148 (LQDQPGGRMLKQPSSTISEASTTVTTSTVDSTSGSKGSRSSGRVHSFGKRD) are disordered. The span at 111–140 (SSTISEASTTVTTSTVDSTSGSKGSRSSGR) shows a compositional bias: low complexity. The PH domain maps to 158 to 257 (PVVVRGWLYK…WVRAMNQAAL (100 aa)). 3 disordered regions span residues 348–384 (PGST…NGMP), 423–467 (LVST…QLPS), and 508–577 (FRHG…TVRP). Low complexity predominate over residues 528–546 (VSSTRNNSDVSRSVSVPPT). The span at 568 to 577 (TPAERVTVRP) shows a compositional bias: basic and acidic residues. A coiled-coil region spans residues 678 to 799 (DKILQELEFR…RIEDVMTGLS (122 aa)). Disordered stretches follow at residues 830-928 (SRCM…SYSN) and 1032-1064 (HQRA…SDPG). Residues 913–924 (RQSDERKRDRES) are compositionally biased toward basic and acidic residues. The stretch at 1016–1044 (QRVRMSVEEQLERMKRHQRALVRERKRNL) forms a coiled coil. Positions 1032–1043 (HQRALVRERKRN) are enriched in basic residues.

It localises to the cell junction. The protein localises to the adherens junction. The protein resides in the cytoplasm. It is found in the cytoskeleton. Its subcellular location is the microtubule organizing center. It localises to the centrosome. Its function is as follows. Required for zonula adherens biogenesis and maintenance. This chain is Pleckstrin homology domain-containing family A member 7 (plekha7), found in Danio rerio (Zebrafish).